Reading from the N-terminus, the 959-residue chain is Outer capsid protein VP2 (959 aa).

This sequence belongs to the orbivirus VP2 family.

The protein localises to the virion. Functionally, the VP2 protein is one of the two proteins (with VP5) which constitute the virus particle outer capsid. It is the major target of the host immunogenic response. Responsible for viral attachment to target host cell, probably by binding to sialic acid. This attachment induces virion internalization predominantly through clathrin-dependent endocytosis. The protein is Outer capsid protein VP2 (Segment-2) of Antilocapra americana (Pronghorn).